Reading from the N-terminus, the 237-residue chain is Phosphoribosylaminoimidazole-succinocarboxamide synthase (237 aa).

It belongs to the SAICAR synthetase family.

The catalysed reaction is 5-amino-1-(5-phospho-D-ribosyl)imidazole-4-carboxylate + L-aspartate + ATP = (2S)-2-[5-amino-1-(5-phospho-beta-D-ribosyl)imidazole-4-carboxamido]succinate + ADP + phosphate + 2 H(+). The protein operates within purine metabolism; IMP biosynthesis via de novo pathway; 5-amino-1-(5-phospho-D-ribosyl)imidazole-4-carboxamide from 5-amino-1-(5-phospho-D-ribosyl)imidazole-4-carboxylate: step 1/2. This is Phosphoribosylaminoimidazole-succinocarboxamide synthase from Escherichia coli O7:K1 (strain IAI39 / ExPEC).